The chain runs to 334 residues: Ornithine carbamoyltransferase (334 aa).

Residues 56-59 (STRT), Q83, R107, and 134-137 (HPTQ) each bind carbamoyl phosphate. L-ornithine contacts are provided by residues N168, D232, and 236 to 237 (SM). Carbamoyl phosphate contacts are provided by residues 274 to 275 (CL) and R320.

It belongs to the aspartate/ornithine carbamoyltransferase superfamily. OTCase family.

Its subcellular location is the cytoplasm. It carries out the reaction carbamoyl phosphate + L-ornithine = L-citrulline + phosphate + H(+). The protein operates within amino-acid biosynthesis; L-arginine biosynthesis; L-arginine from L-ornithine and carbamoyl phosphate: step 1/3. Reversibly catalyzes the transfer of the carbamoyl group from carbamoyl phosphate (CP) to the N(epsilon) atom of ornithine (ORN) to produce L-citrulline. The chain is Ornithine carbamoyltransferase from Escherichia coli (strain 55989 / EAEC).